The sequence spans 500 residues: Cytochrome P450 2D27 (500 aa).

Residue Cys446 coordinates heme.

Belongs to the cytochrome P450 family. Heme serves as cofactor. In terms of tissue distribution, expressed in liver, but not in kidney, small intestine, and brain.

The protein localises to the endoplasmic reticulum membrane. It is found in the microsome membrane. Its function is as follows. Has bufuralol 1'-hydroxylase and debrisoquine 4-hydroxylase activities. This is Cytochrome P450 2D27 (CYP2D27) from Mesocricetus auratus (Golden hamster).